The chain runs to 174 residues: Large ribosomal subunit protein uL10 (174 aa).

It belongs to the universal ribosomal protein uL10 family. In terms of assembly, part of the ribosomal stalk of the 50S ribosomal subunit. The N-terminus interacts with L11 and the large rRNA to form the base of the stalk. The C-terminus forms an elongated spine to which L12 dimers bind in a sequential fashion forming a multimeric L10(L12)X complex.

Functionally, forms part of the ribosomal stalk, playing a central role in the interaction of the ribosome with GTP-bound translation factors. The polypeptide is Large ribosomal subunit protein uL10 (Anaeromyxobacter sp. (strain K)).